The primary structure comprises 248 residues: 2,3-bisphosphoglycerate-dependent phosphoglycerate mutase 2 (248 aa).

Substrate contacts are provided by residues 8-15 (RHGESAWN), 21-22 (TG), arginine 60, 87-90 (EKHY), lysine 98, 114-115 (RR), and 183-184 (GN). Histidine 9 acts as the Tele-phosphohistidine intermediate in catalysis. Glutamate 87 functions as the Proton donor/acceptor in the catalytic mechanism.

The protein belongs to the phosphoglycerate mutase family. BPG-dependent PGAM subfamily.

The enzyme catalyses (2R)-2-phosphoglycerate = (2R)-3-phosphoglycerate. The protein operates within carbohydrate degradation; glycolysis; pyruvate from D-glyceraldehyde 3-phosphate: step 3/5. Its function is as follows. Catalyzes the interconversion of 2-phosphoglycerate and 3-phosphoglycerate. The protein is 2,3-bisphosphoglycerate-dependent phosphoglycerate mutase 2 of Bacteroides thetaiotaomicron (strain ATCC 29148 / DSM 2079 / JCM 5827 / CCUG 10774 / NCTC 10582 / VPI-5482 / E50).